The primary structure comprises 921 residues: MASAATVAAAGRALRRAVLLLRRGYQTERGVYGYRPRKAKSGEPRGDRARPSVDHGLARLVTVYCEHGHKAAQINPLFPGQALLDTVPEIQALVRTLQGPFTTTGLLNLGKEAASLEEVLAYLNHIYCGPISIETAQLQSQEERDWFARRFEELKKETFTTEERKYLSKLLLESQEFDHFLATKFATVKRYGGEGAESMMGFFHELLKLSAYGGITDIIIGMPHRGRLNLLTGLLQLPPELMFRKMRGLSEFPENVATIGDVLSHLTSSVDLDFGAHQPLHVTMLPNPSHLEAVNPVAVGKTRGRQQSREDGDYSPNGSAQPGDKVICLQVHGDASFCGQGIVLETFTLSNLPHFRIGGSIHLIVNNQLGYTTPAERGRSSLYSSDIGKLVGCAIIHVNGDSPEEVVRATRLAFEYQRQFRKDVIVDLLCYRQWGHNELDEPFFTNPVMYKIIRARKSIPDTYAEHLIASGLMTQEEVSDIKTSYYTKLNDHLANVAHYSPPATNLQARWQGLVQPEACVTTWDTGVPLELLRFIGVKSVEVPEELQVHSHLLKMYVQSRMEKVKNGSGLDWATAETLALGSLLAQGFNVRLSGQDVGRGTFSQRHAMVVCQDTDDAYIPLNHMDPNQKGFLEVSNSPLSEEAVLGFEYGMSIESPTLLPLWEAQFGDFFNGAQIIFDTFISGGEAKWLLQSGLVILLPHGYDGAGPEHSSCRIERFLQMCDSAEEGVDSDTVNMFVVHPTTPAQYFHLLRRQMIRNFRKPLIVASPKMLLRYPAAVSTLEEMAPGTAFKPVIGDSSVDPKNVKTLIFCSGKHFYALLKQRESLGTKKHDFAIIRLEELCPFPLDALQQEMSKYKHVRDVIWSQEEPQNMGPWSFVSPRFEKQLACRLRLVSRPPLPAPAVGIGTVHQQQHEDILSKTFTQ.

Lysine 184 and lysine 189 each carry N6-succinyllysine. The interval 300–319 (GKTRGRQQSREDGDYSPNGS) is disordered. 2 positions are modified to N6-succinyllysine: lysine 801 and lysine 819.

It belongs to the alpha-ketoglutarate dehydrogenase family. As to quaternary structure, the 2-oxoadipate dehydrogenase complex is composed of OADH (2-oxoadipate dehydrogenase; E1a), DLST (dihydrolipoamide succinyltransferase; E2) and DLD (dihydrolipoamide dehydrogenase; E3). E1a functional unit is a dimer. The cofactor is thiamine diphosphate.

Its subcellular location is the mitochondrion. The catalysed reaction is N(6)-[(R)-lipoyl]-L-lysyl-[protein] + 2-oxoadipate + H(+) = N(6)-[(R)-S(8)-glutaryldihydrolipoyl]-L-lysyl-[protein] + CO2. Its pathway is amino-acid degradation. 2-oxoadipate dehydrogenase (E1a) component of the 2-oxoadipate dehydrogenase complex (OADHC). Participates in the first step, rate limiting for the overall conversion of 2-oxoadipate (alpha-ketoadipate) to glutaryl-CoA and CO(2) catalyzed by the whole OADHC. Catalyzes the irreversible decarboxylation of 2-oxoadipate via the thiamine diphosphate (ThDP) cofactor and subsequent transfer of the decarboxylated acyl intermediate on an oxidized dihydrolipoyl group that is covalently amidated to the E2 enzyme (dihydrolipoyllysine-residue succinyltransferase or DLST). Can catalyze the decarboxylation of 2-oxoglutarate in vitro, but at a much lower rate than 2-oxoadipate. Responsible for the last step of L-lysine, L-hydroxylysine and L-tryptophan catabolism with the common product being 2-oxoadipate. This chain is 2-oxoadipate dehydrogenase complex component E1 (Dhtkd1), found in Mus musculus (Mouse).